Reading from the N-terminus, the 1237-residue chain is Anion exchange protein 2 (1237 aa).

The segment at 1 to 238 (MSSAPRRPAS…YNLQERRRIG (238 aa)) is disordered. Residues 1-703 (MSSAPRRPAS…SDFRDALDPQ (703 aa)) lie on the Cytoplasmic side of the membrane. Composition is skewed to basic and acidic residues over residues 38–48 (LRTLGVERFEE) and 57–74 (GGEEPGRSYGEEDFEYHR). Basic residues-rich tracts occupy residues 75–84 (QSSHHIHHPL) and 93–109 (RRRKTPQGPGRKPRRRP). Residues Ser112, Ser131, Ser144, Ser170, Ser172, and Ser239 each carry the phosphoserine modification. Positions 119–132 (TIEEGEEDEEEASE) are enriched in acidic residues. Thr253 carries the phosphothreonine modification. At Lys270 the chain carries N6-methyllysine. Residues 285–316 (VRKNAKGSTQAAREGREPGPTPRARPRAPHKP) form a disordered region. Ser439 is modified (phosphoserine). Residues 445–466 (SLLGHHHAQGTESDPHVTEPLI) form a disordered region. 4 helical membrane-spanning segments follow: residues 704 to 727 (CLAAVIFIYFAALSPAITFGGLLG), 733 to 770 (LIGVSELIMSTALQGVVFCLLGAQPLLVIGFSGPLLVF), 790 to 812 (VWIGFWLVFLALLMVALEGSFLV), and 822 to 843 (IFAFLISLIFIYETFYKLIKIF). Positions 704 to 1237 (CLAAVIFIYF…DEYNEMPMPV (534 aa)) are membrane (anion exchange). The Extracellular portion of the chain corresponds to 844-896 (QEHPLHGCSGSNDSEAGSSSSSNMTWATTILVPDNSSASGQSGQEKPRGQPNT). Asn855, Asn866, and Asn878 each carry an N-linked (GlcNAc...) asparagine glycan. A helical transmembrane segment spans residues 897 to 914 (ALLSLVLMAGTFFIAFFL). The Cytoplasmic portion of the chain corresponds to 915 to 929 (RKFKNSRFFPGRIRR). Transmembrane regions (helical) follow at residues 930 to 950 (VIGDFGVPIAILIMVLVDYSI), 984 to 1006 (PFPVWMMVASLLPAVLVFILIFM), 1032 to 1053 (LLLIVAMGGICALFGLPWLAAA), 1087 to 1132 (VTGL…IQFY), and 1159 to 1195 (MHLFTALQLLCLALLWAVMSTAASLAFPFILILTVPL). Cys1169 carries S-palmitoyl cysteine lipidation.

It belongs to the anion exchanger (TC 2.A.31) family. In terms of tissue distribution, expressed in the choroid plexus epithelium (at protein level). Expressed in the parotid gland and sublingual salivary gland acinar cells (at protein level). As to expression, widely expressed at similar levels in all tissues examined. Expressed in the testis. Predominantly expressed in stomach although they are also detected at lower levels in other tissues. Expressed in the testis. In terms of tissue distribution, stomach-specific. As to expression, expressed at slightly higher levels in lung and stomach than in other tissues.

The protein resides in the apical cell membrane. Its subcellular location is the basolateral cell membrane. The enzyme catalyses hydrogencarbonate(in) + chloride(out) = hydrogencarbonate(out) + chloride(in). Its activity is regulated as follows. Inhibited by 4,4'-diisothiocyanatostilbene-2,2'-disulfonic acid (DIDS) and acetazolamide. Muscarinic receptor stimulation enhances activity through a Ca(2+)-dependent mechanism. Its function is as follows. Sodium-independent anion exchanger which mediates the electroneutral exchange of chloride for bicarbonate ions across the cell membrane. Plays an important role in osteoclast differentiation and function. Regulates bone resorption and calpain-dependent actin cytoskeleton organization in osteoclasts via anion exchange-dependent control of pH. Essential for intracellular pH regulation in CD8(+) T-cells upon CD3 stimulation, modulating CD8(+) T-cell responses. In terms of biological role, plays a critical role in male fertility and spermiogenesis. The chain is Anion exchange protein 2 (Slc4a2) from Mus musculus (Mouse).